A 195-amino-acid polypeptide reads, in one-letter code: Imidazoleglycerol-phosphate dehydratase (195 aa).

It belongs to the imidazoleglycerol-phosphate dehydratase family.

It localises to the cytoplasm. The enzyme catalyses D-erythro-1-(imidazol-4-yl)glycerol 3-phosphate = 3-(imidazol-4-yl)-2-oxopropyl phosphate + H2O. Its pathway is amino-acid biosynthesis; L-histidine biosynthesis; L-histidine from 5-phospho-alpha-D-ribose 1-diphosphate: step 6/9. This is Imidazoleglycerol-phosphate dehydratase from Sphingopyxis alaskensis (strain DSM 13593 / LMG 18877 / RB2256) (Sphingomonas alaskensis).